Consider the following 520-residue polypeptide: Kelch domain-containing protein 4 (520 aa).

The segment covering 1-10 (MGKKGKKEKK) has biased composition (basic residues). The tract at residues 1-33 (MGKKGKKEKKGRGAEKTAAKMEKKVSKRSRKEE) is disordered. The segment covering 11 to 24 (GRGAEKTAAKMEKK) has biased composition (basic and acidic residues). 5 Kelch repeats span residues 77–129 (ELIL…VVPQ), 133–187 (QLWV…AWKR), 188–241 (QLIL…VTPQ), 243–289 (GIVV…MNPS), and 308–361 (QTLF…RRGR). 3 disordered regions span residues 346–379 (QLKGPKSEKKKRRRGRKEEPEGGSRPACGGAGTQ), 402–431 (LTAPGSAGQPRSEDEDSLEEAGSPAPGPCP), and 481–520 (DPETQEWLEETDSEEDSEEVEGAEGGVDDEDSGEESGAED). A phosphoserine mark is found at Ser-413 and Ser-418. The stretch at 443–494 (VLYVYGGMFEAGDRQVTLSDLHCLDLHRMEAWKALVEMDPETQEWLEETDSE) is one Kelch 6 repeat.

The sequence is that of Kelch domain-containing protein 4 (KLHDC4) from Homo sapiens (Human).